Here is a 330-residue protein sequence, read N- to C-terminus: Membrane progestin receptor gamma (330 aa).

The Cytoplasmic portion of the chain corresponds to 1–51 (MLSLKLPRLFRIDQVPQVFHEQGILFGYRHPQSSATACILSLFQMTNETLN). A helical transmembrane segment spans residues 52–72 (IWTHLLPFWFFVWRFMTALYV). Residues 73-81 (TDIQNDSYS) lie on the Extracellular side of the membrane. A helical transmembrane segment spans residues 82–101 (WPMLVYMCTSCVYPLASSCA). Over 102 to 113 (HTFSSMSKNARH) the chain is Cytoplasmic. Residues 114–134 (ICYFLDYGAVNLFSLGSAIAY) form a helical membrane-spanning segment. The Extracellular segment spans residues 135–141 (SAYTFPD). Residues 142-162 (ALVCSTFHECYVALAVLNTIL) traverse the membrane as a helical segment. The Cytoplasmic portion of the chain corresponds to 163–186 (STGLSCYSRFLELQKPRLCKLLRV). Residues 187–207 (LAFAYPYTWDSLPIFYRLFLF) form a helical membrane-spanning segment. Topologically, residues 208-253 (PGESSRNEAMLYHQKHMGMTLLASFFYSAHLPERLAPGRFDYIGHS) are extracellular. The chain crosses the membrane as a helical span at residues 254–274 (HQLFHVCVILATHLQMEAILL). Residues 275-294 (DKTLRREWLLATSRPFSFPQ) lie on the Cytoplasmic side of the membrane. The chain crosses the membrane as a helical span at residues 295-315 (IAAAMLLCIIFSLSNIIYFSA). Residues 316 to 330 (ALYRIPEPELHEKET) lie on the Extracellular side of the membrane.

It belongs to the ADIPOR family.

The protein localises to the cell membrane. Functionally, plasma membrane progesterone (P4) receptor coupled to G proteins. Seems to act through a G(i) mediated pathway. May be involved in oocyte maturation. The protein is Membrane progestin receptor gamma of Mus musculus (Mouse).